A 240-amino-acid polypeptide reads, in one-letter code: Ribonuclease PH (240 aa).

Phosphate is bound by residues arginine 87 and 125-127; that span reads GTR.

Belongs to the RNase PH family. Homohexameric ring arranged as a trimer of dimers.

It carries out the reaction tRNA(n+1) + phosphate = tRNA(n) + a ribonucleoside 5'-diphosphate. Functionally, phosphorolytic 3'-5' exoribonuclease that plays an important role in tRNA 3'-end maturation. Removes nucleotide residues following the 3'-CCA terminus of tRNAs; can also add nucleotides to the ends of RNA molecules by using nucleoside diphosphates as substrates, but this may not be physiologically important. Probably plays a role in initiation of 16S rRNA degradation (leading to ribosome degradation) during starvation. The sequence is that of Ribonuclease PH from Pseudomonas fluorescens (strain ATCC BAA-477 / NRRL B-23932 / Pf-5).